The sequence spans 332 residues: 2-hydroxyacid dehydrogenase homolog 2 (332 aa).

Residues 154–155 (KI), 233–235 (TSR), and D259 each bind NAD(+). The active site involves R235. E264 is an active-site residue. The active-site Proton donor is H296. 296–299 (HQAF) is an NAD(+) binding site.

It belongs to the D-isomer specific 2-hydroxyacid dehydrogenase family.

It is found in the cytoplasm. Its subcellular location is the nucleus. The sequence is that of 2-hydroxyacid dehydrogenase homolog 2 from Schizosaccharomyces pombe (strain 972 / ATCC 24843) (Fission yeast).